A 269-amino-acid chain; its full sequence is tRNA (guanine-N(1)-)-methyltransferase (269 aa).

Residues glycine 115 and 139–144 contribute to the S-adenosyl-L-methionine site; that span reads LGDYVL.

This sequence belongs to the RNA methyltransferase TrmD family. Homodimer.

Its subcellular location is the cytoplasm. It catalyses the reaction guanosine(37) in tRNA + S-adenosyl-L-methionine = N(1)-methylguanosine(37) in tRNA + S-adenosyl-L-homocysteine + H(+). Functionally, specifically methylates guanosine-37 in various tRNAs. In Pseudarthrobacter chlorophenolicus (strain ATCC 700700 / DSM 12829 / CIP 107037 / JCM 12360 / KCTC 9906 / NCIMB 13794 / A6) (Arthrobacter chlorophenolicus), this protein is tRNA (guanine-N(1)-)-methyltransferase.